Here is a 145-residue protein sequence, read N- to C-terminus: D-aminoacyl-tRNA deacylase (145 aa).

A Gly-cisPro motif, important for rejection of L-amino acids motif is present at residues 137-138 (GP).

Belongs to the DTD family. Homodimer.

The protein resides in the cytoplasm. It catalyses the reaction glycyl-tRNA(Ala) + H2O = tRNA(Ala) + glycine + H(+). The enzyme catalyses a D-aminoacyl-tRNA + H2O = a tRNA + a D-alpha-amino acid + H(+). Functionally, an aminoacyl-tRNA editing enzyme that deacylates mischarged D-aminoacyl-tRNAs. Also deacylates mischarged glycyl-tRNA(Ala), protecting cells against glycine mischarging by AlaRS. Acts via tRNA-based rather than protein-based catalysis; rejects L-amino acids rather than detecting D-amino acids in the active site. By recycling D-aminoacyl-tRNA to D-amino acids and free tRNA molecules, this enzyme counteracts the toxicity associated with the formation of D-aminoacyl-tRNA entities in vivo and helps enforce protein L-homochirality. The polypeptide is D-aminoacyl-tRNA deacylase (Salmonella enteritidis PT4 (strain P125109)).